The following is a 525-amino-acid chain: GMP synthase [glutamine-hydrolyzing] (525 aa).

Positions 9 to 207 constitute a Glutamine amidotransferase type-1 domain; sequence RILILDFGSQ…VRDICQCEAL (199 aa). Cysteine 86 functions as the Nucleophile in the catalytic mechanism. Residues histidine 181 and glutamate 183 contribute to the active site. Residues 208–400 form the GMPS ATP-PPase domain; sequence WTPAKIIDDA…LGLPYDMLYR (193 aa). 235 to 241 serves as a coordination point for ATP; the sequence is SGGVDSS.

Homodimer.

The enzyme catalyses XMP + L-glutamine + ATP + H2O = GMP + L-glutamate + AMP + diphosphate + 2 H(+). It participates in purine metabolism; GMP biosynthesis; GMP from XMP (L-Gln route): step 1/1. Functionally, catalyzes the synthesis of GMP from XMP. The protein is GMP synthase [glutamine-hydrolyzing] of Shigella sonnei (strain Ss046).